A 177-amino-acid polypeptide reads, in one-letter code: Large ribosomal subunit protein uL6 (177 aa).

This sequence belongs to the universal ribosomal protein uL6 family. Part of the 50S ribosomal subunit.

This protein binds to the 23S rRNA, and is important in its secondary structure. It is located near the subunit interface in the base of the L7/L12 stalk, and near the tRNA binding site of the peptidyltransferase center. This Cellvibrio japonicus (strain Ueda107) (Pseudomonas fluorescens subsp. cellulosa) protein is Large ribosomal subunit protein uL6.